Reading from the N-terminus, the 366-residue chain is Elongation factor Ts, mitochondrial (366 aa).

The transit peptide at Met-1–Phe-50 directs the protein to the mitochondrion.

The protein belongs to the EF-Ts family.

The protein localises to the mitochondrion. In terms of biological role, associates with the EF-Tu.GDP complex and induces the exchange of GDP to GTP. It remains bound to the aminoacyl-tRNA.EF-Tu.GTP complex up to the GTP hydrolysis stage on the ribosome. This chain is Elongation factor Ts, mitochondrial, found in Oryza sativa subsp. japonica (Rice).